Reading from the N-terminus, the 652-residue chain is Acetyl-coenzyme A synthetase (652 aa).

Residues 193–196 and T312 each bind CoA; that span reads RRGK. ATP is bound by residues 388 to 390, 412 to 417, D501, and R516; these read GEP and DTWWQT. S524 contributes to the CoA binding site. Mg(2+)-binding residues include V538, H540, and V543. An N6-acetyllysine modification is found at K611.

The protein belongs to the ATP-dependent AMP-binding enzyme family. Mg(2+) serves as cofactor. Acetylated. Deacetylation by the SIR2-homolog deacetylase activates the enzyme.

The catalysed reaction is acetate + ATP + CoA = acetyl-CoA + AMP + diphosphate. In terms of biological role, catalyzes the conversion of acetate into acetyl-CoA (AcCoA), an essential intermediate at the junction of anabolic and catabolic pathways. AcsA undergoes a two-step reaction. In the first half reaction, AcsA combines acetate with ATP to form acetyl-adenylate (AcAMP) intermediate. In the second half reaction, it can then transfer the acetyl group from AcAMP to the sulfhydryl group of CoA, forming the product AcCoA. The polypeptide is Acetyl-coenzyme A synthetase (Streptomyces avermitilis (strain ATCC 31267 / DSM 46492 / JCM 5070 / NBRC 14893 / NCIMB 12804 / NRRL 8165 / MA-4680)).